Consider the following 251-residue polypeptide: Triosephosphate isomerase 1 (251 aa).

9 to 11 provides a ligand contact to substrate; it reads NWK. His95 functions as the Electrophile in the catalytic mechanism. Glu167 serves as the catalytic Proton acceptor. Residues Gly173, Ser213, and 234 to 235 each bind substrate; that span reads GG.

Belongs to the triosephosphate isomerase family. In terms of assembly, homodimer.

It is found in the cytoplasm. It catalyses the reaction D-glyceraldehyde 3-phosphate = dihydroxyacetone phosphate. The protein operates within carbohydrate biosynthesis; gluconeogenesis. It participates in carbohydrate degradation; glycolysis; D-glyceraldehyde 3-phosphate from glycerone phosphate: step 1/1. Its function is as follows. Involved in the gluconeogenesis. Catalyzes stereospecifically the conversion of dihydroxyacetone phosphate (DHAP) to D-glyceraldehyde-3-phosphate (G3P). This is Triosephosphate isomerase 1 from Listeria monocytogenes serovar 1/2a (strain ATCC BAA-679 / EGD-e).